The primary structure comprises 146 residues: Large ribosomal subunit protein uL15 (146 aa).

Positions 1 to 54 are disordered; it reads MKLHELKPAAGSRKAPKRVGRGTGSGLGRNAGKGEKGQNARSGGGVRPGFEGGQ. 2 stretches are compositionally biased toward gly residues: residues 21 to 31 and 42 to 52; these read RGTGSGLGRNA and SGGGVRPGFEG.

It belongs to the universal ribosomal protein uL15 family. In terms of assembly, part of the 50S ribosomal subunit.

Binds to the 23S rRNA. The chain is Large ribosomal subunit protein uL15 from Clostridium acetobutylicum (strain ATCC 824 / DSM 792 / JCM 1419 / IAM 19013 / LMG 5710 / NBRC 13948 / NRRL B-527 / VKM B-1787 / 2291 / W).